The following is a 209-amino-acid chain: Yop proteins translocation protein K (209 aa).

In terms of biological role, belongs to an operon involved in the translocation of Yop proteins across the bacterial membranes or in the specific control of this function. This is Yop proteins translocation protein K (yscK) from Yersinia pseudotuberculosis serotype I (strain IP32953).